Reading from the N-terminus, the 312-residue chain is Ribosomal RNA small subunit methyltransferase H (312 aa).

S-adenosyl-L-methionine contacts are provided by residues 37–39 (GGH), D57, F83, and D104.

Belongs to the methyltransferase superfamily. RsmH family.

The protein resides in the cytoplasm. It carries out the reaction cytidine(1402) in 16S rRNA + S-adenosyl-L-methionine = N(4)-methylcytidine(1402) in 16S rRNA + S-adenosyl-L-homocysteine + H(+). In terms of biological role, specifically methylates the N4 position of cytidine in position 1402 (C1402) of 16S rRNA. This is Ribosomal RNA small subunit methyltransferase H from Malacoplasma penetrans (strain HF-2) (Mycoplasma penetrans).